Here is a 407-residue protein sequence, read N- to C-terminus: Arginine biosynthesis bifunctional protein ArgJ (407 aa).

6 residues coordinate substrate: T157, K183, T194, E280, N402, and T407. The active-site Nucleophile is T194.

The protein belongs to the ArgJ family. Heterotetramer of two alpha and two beta chains.

It is found in the cytoplasm. It carries out the reaction N(2)-acetyl-L-ornithine + L-glutamate = N-acetyl-L-glutamate + L-ornithine. The enzyme catalyses L-glutamate + acetyl-CoA = N-acetyl-L-glutamate + CoA + H(+). Its pathway is amino-acid biosynthesis; L-arginine biosynthesis; L-ornithine and N-acetyl-L-glutamate from L-glutamate and N(2)-acetyl-L-ornithine (cyclic): step 1/1. It participates in amino-acid biosynthesis; L-arginine biosynthesis; N(2)-acetyl-L-ornithine from L-glutamate: step 1/4. Functionally, catalyzes two activities which are involved in the cyclic version of arginine biosynthesis: the synthesis of N-acetylglutamate from glutamate and acetyl-CoA as the acetyl donor, and of ornithine by transacetylation between N(2)-acetylornithine and glutamate. The polypeptide is Arginine biosynthesis bifunctional protein ArgJ (Bacillus anthracis).